We begin with the raw amino-acid sequence, 580 residues long: Fumarate hydratase class I, aerobic (580 aa).

[4Fe-4S] cluster-binding residues include Cys-105, Cys-224, and Cys-318.

Belongs to the class-I fumarase family. As to quaternary structure, homodimer. It depends on [4Fe-4S] cluster as a cofactor.

The catalysed reaction is (S)-malate = fumarate + H2O. It catalyses the reaction oxaloacetate = enol-oxaloacetate. It functions in the pathway carbohydrate metabolism; tricarboxylic acid cycle; (S)-malate from fumarate: step 1/1. Catalyzes the reversible hydration of fumarate to (S)-malate. Functions as an aerobic enzyme in the direction of malate formation as part of the citric acid cycle. Accounts for about 80% of the fumarase activity when the bacteria grow aerobically. To a lesser extent, also displays D-tartrate dehydratase activity in vitro, but is not able to convert (R)-malate, L-tartrate or meso-tartrate. Can also catalyze the isomerization of enol- to keto-oxaloacetate. This chain is Fumarate hydratase class I, aerobic, found in Salmonella typhimurium (strain LT2 / SGSC1412 / ATCC 700720).